The following is a 382-amino-acid chain: Mitogen-activated protein kinase 9 (382 aa).

The Protein kinase domain occupies 26–321 (YQQLKPIGSG…VDEALRHPYI (296 aa)). ATP-binding positions include 33–38 (GSGAQG) and Lys55. Catalysis depends on Asp151, which acts as the Proton acceptor. The residue at position 183 (Thr183) is a Phosphothreonine. The TXY motif lies at 183–185 (TPY). At Tyr185 the chain carries Phosphotyrosine.

The protein belongs to the protein kinase superfamily. CMGC Ser/Thr protein kinase family. MAP kinase subfamily. Mg(2+) serves as cofactor. In terms of processing, dually phosphorylated on Thr-183 and Tyr-185, which activates the enzyme. In terms of tissue distribution, expressed in the neuroepithelium of developing brain at stages 16 to 26.

It carries out the reaction L-seryl-[protein] + ATP = O-phospho-L-seryl-[protein] + ADP + H(+). It catalyses the reaction L-threonyl-[protein] + ATP = O-phospho-L-threonyl-[protein] + ADP + H(+). Its activity is regulated as follows. Activated by threonine and tyrosine phosphorylation. Functionally, responds to activation by environmental stress and pro-inflammatory cytokines by phosphorylating a number of transcription factors, primarily components of AP-1 such as JUN and ATF2 and thus regulates AP-1 transcriptional activity. May play a role in the development of the central nervous system during embryogenesis. May play a role in the regulation of the circadian clock. This Gallus gallus (Chicken) protein is Mitogen-activated protein kinase 9 (MAPK9).